A 138-amino-acid chain; its full sequence is Flavodoxin (138 aa).

One can recognise a Flavodoxin-like domain in the interval 1-136; it reads MKIVYWSGTG…DCIEFGKKIA (136 aa).

Belongs to the flavodoxin family. Requires FMN as cofactor.

Low-potential electron donor to a number of redox enzymes. The sequence is that of Flavodoxin from Clostridium beijerinckii (Clostridium MP).